The chain runs to 457 residues: Putative adhesion G protein-coupled receptor E4P (457 aa).

An N-terminal signal peptide occupies residues 1 to 14 (MGSRFLLVLLSGAS). Disulfide bonds link Cys-15/Cys-24, Cys-18/Cys-30, Cys-32/Cys-52, Cys-58/Cys-71, Cys-65/Cys-80, and Cys-82/Cys-103. The region spanning 15–53 (CPPCPKYASCHNSTHCTCEDGFRARSGRTYFHDSSEKCE) is the EGF-like 1 domain. Over 16–191 (PPCPKYASCH…LAPKEDPVLT (176 aa)) the chain is Extracellular. A glycan (N-linked (GlcNAc...) asparagine) is linked at Asn-26. Residues 54-104 (DINECETGLAKCKYKAYCRNKVGGYICSCLVKYTLFNFLAGIIDYDHPDCY) enclose the EGF-like 2; calcium-binding domain. N-linked (GlcNAc...) asparagine glycans are attached at residues Asn-106 and Asn-162. Positions 134 to 186 (DKRTKHICVYWEGSEGGWSTEGCSHVHSNGSYTKCKCFHLSSFAVLVALAPKE) constitute a GAIN-B domain. 2 disulfides stabilise this stretch: Cys-141/Cys-168 and Cys-156/Cys-170. A GPS region spans residues 141-186 (CVYWEGSEGGWSTEGCSHVHSNGSYTKCKCFHLSSFAVLVALAPKE). A helical transmembrane segment spans residues 192 to 212 (VITQVGLTISLLCLFLAILTF). At 213-223 (LLCRPIQNTST) the chain is on the cytoplasmic side. The chain crosses the membrane as a helical span at residues 224 to 244 (SLHLELSLCLFLAHLLFLTGI). N-linked (GlcNAc...) asparagine glycosylation is present at Asn-245. At 245–250 (NRTEPE) the chain is on the extracellular side. A helical transmembrane segment spans residues 251–271 (VLCSIIAGLLHFLYLACFTWM). The Cytoplasmic segment spans residues 272–299 (LLEGLHLFLTVRNLKVANYTSTGRFKKR). The helical transmembrane segment at 300–320 (FMYPVGYGIPAVIIAVSAIVG) threads the bilayer. Residues 321–336 (PQNYGTFTCWLKLDKG) are Extracellular-facing. A helical membrane pass occupies residues 337 to 357 (FIWSFMGPVAVIILINLVFYF). Residues 358 to 384 (QVLWILRSKLSSLNKEVSTIQDTRVMT) lie on the Cytoplasmic side of the membrane. The helical transmembrane segment at 385–405 (FKAISQLFILGCSWGLGFFMV) threads the bilayer. Topologically, residues 406–413 (EEVGKTIG) are extracellular. The chain crosses the membrane as a helical span at residues 414–434 (SIIAYSFTIINTLQGVLLFVV). At 435–457 (HCLLNRQVRLIILSVISLVPKSN) the chain is on the cytoplasmic side.

The protein belongs to the G-protein coupled receptor 2 family. Adhesion G-protein coupled receptor (ADGR) subfamily. Forms a heterodimer, consisting of a large extracellular region (alpha subunit) non-covalently linked to a seven-transmembrane moiety (beta subunit). Glycosylated. Post-translationally, proteolytically cleaved into 2 subunits, an extracellular alpha subunit and a seven-transmembrane subunit.

The protein localises to the cell membrane. It localises to the secreted. Its function is as follows. May mediate the cellular interaction between myeloid cells and B-cells. In Homo sapiens (Human), this protein is Putative adhesion G protein-coupled receptor E4P.